Reading from the N-terminus, the 358-residue chain is Peptide chain release factor 1 (358 aa).

Position 235 is an N5-methylglutamine (Gln235). Residues 284-309 (KVESERSASRKSQVGSGDRSERIRTY) are disordered.

It belongs to the prokaryotic/mitochondrial release factor family. Methylated by PrmC. Methylation increases the termination efficiency of RF1.

The protein localises to the cytoplasm. Peptide chain release factor 1 directs the termination of translation in response to the peptide chain termination codons UAG and UAA. The polypeptide is Peptide chain release factor 1 (Bartonella tribocorum (strain CIP 105476 / IBS 506)).